Here is a 265-residue protein sequence, read N- to C-terminus: MATPPKRICIDVPASPSGNKCKVKRISIEGNIAAGKSTFVNILKKANEEWDVVPEPIARWCNIQSCKDEFEELTTSQKSGGNLLQMMYEKPERWSFTFQSYACLSRIRAQLKALGGKLKEAENPVLFFERSVYSDRYIFASNLYEAECMNETEWTVYQDWHDWMNSQFGADLELDGIIYLRAIPEKCLNRVYTRGREEEQGIPMEYLEKLHYKHETWLHHRTLRTDFEYLQEIPILTLDVNEDFRDNKQKQESLIEKVKEFLSTL.

ATP is bound at residue 30–38 (GNIAAGKST). Residues Glu55, Tyr88, and Gln99 each coordinate substrate. Glu129 functions as the Proton acceptor in the catalytic mechanism. The substrate site is built by Arg130 and Asp135. 190–194 (RVYTR) serves as a coordination point for ATP. Glu199 is a substrate binding site. 242-244 (EDF) is an ATP binding site.

This sequence belongs to the DCK/DGK family. In terms of assembly, homodimer.

The protein localises to the nucleus. It catalyses the reaction 2'-deoxycytidine + a ribonucleoside 5'-triphosphate = dCMP + a ribonucleoside 5'-diphosphate + H(+). The catalysed reaction is 2'-deoxyguanosine + ATP = dGMP + ADP + H(+). It carries out the reaction 2'-deoxyadenosine + ATP = dAMP + ADP + H(+). In terms of biological role, phosphorylates the deoxyribonucleosides deoxyadenosine, deoxycytidine and deoxyguanosine with highest activity against deoxycytidine followed by deadenosine and deoxyguanosine. Shows only very minor activity against deoxyuridine and deoxythymidine. In Xenopus laevis (African clawed frog), this protein is Deoxycytidine kinase 1.